The sequence spans 451 residues: UDP-glycosyltransferase 76E11 (451 aa).

Residues Ser273, 332-334, 349-357, and 371-374 contribute to the UDP-alpha-D-glucose site; these read APQ, HCGWNSTLE, and SSDQ.

It belongs to the UDP-glycosyltransferase family.

Functionally, possesses low quercetin 3-O-glucosyltransferase and 7-O-glucosyltransferase activities in vitro. This is UDP-glycosyltransferase 76E11 (UGT76E11) from Arabidopsis thaliana (Mouse-ear cress).